The primary structure comprises 1300 residues: Serine protease EspP (1300 aa).

Residues 1 to 55 (MNKIYSLKYSHITGGLIAVSELSGRVSSRATGKKKHKRILALCFLGLLQSSYSFA) form the signal peptide. Positions 57–311 (QMDISNFYIR…NQTTIDNLKN (255 aa)) constitute a Peptidase S6 domain. Active-site charge relay system residues include H127, D156, and S263. The Autotransporter domain occupies 1034 to 1300 (DINGEAGAWA…AVNANFRYSF (267 aa)).

Cleaved to release the mature protein from the outer membrane.

The protein localises to the periplasm. It localises to the secreted. Its subcellular location is the cell surface. It is found in the cell outer membrane. With respect to regulation, inhibition of cytotoxic activity by phenylmethylsulfonyl fluoride. In terms of biological role, serine protease capable of cleaving pepsin A and human coagulation factor V, which may contribute to the mucosal hemorrhage observed in hemorrhagic colitis. This Escherichia coli O157:H7 protein is Serine protease EspP (espP).